Reading from the N-terminus, the 419-residue chain is CinA-like protein (419 aa).

This sequence belongs to the CinA family.

The polypeptide is CinA-like protein (Parasynechococcus marenigrum (strain WH8102)).